Reading from the N-terminus, the 1310-residue chain is Zinc finger protein 521 (1310 aa).

Positions 1-10 (MSRRKQAKPR) are enriched in basic residues. The tract at residues 1–46 (MSRRKQAKPRSLKDPNCKLEDTSEDGESPDCKKRQEEGDELEEEEA) is disordered. A compositionally biased stretch (basic and acidic residues) spans 11-21 (SLKDPNCKLED). The segment at 48–68 (HSCDSCLQVFESLSDITEHKI) adopts a C2H2-type 1; degenerate zinc-finger fold. The tract at residues 82-106 (DPTCSWPASSPSSKDQASPIHGEGF) is disordered. The span at 87–97 (WPASSPSSKDQ) shows a compositional bias: polar residues. 7 C2H2-type zinc fingers span residues 119 to 141 (YPCQ…EQSH), 147 to 169 (FKCT…IKLH), 175 to 197 (YHCS…LKTH), 203 to 225 (YKCA…MQVH), 247 to 270 (QKCS…AECH), 282 to 305 (LQCM…EQIH), and 311 to 333 (NSCN…MDSH). The C2H2-type 9; degenerate zinc-finger motif lies at 404–428 (YSCIYCSKQLFSSLAVLQIHLKTMH). 3 C2H2-type zinc fingers span residues 436-459 (HICQ…KQVH), 476-499 (YQCN…RSSH), and 512-535 (FFCP…RQVH). The C2H2-type 13; atypical zinc-finger motif lies at 559–584 (YSCSYCTNSPIFNSVLKLNKHIKENH). C2H2-type zinc fingers lie at residues 633-655 (YICN…LKTH), 663-685 (LTCP…VTIH), 693-716 (YICE…LDMH), 721-744 (FRCT…AVKH), 751-774 (YRCT…KHNH), 782-804 (HKCI…ITTH), and 808-831 (YNCK…REKH). A C2H2-type 21; degenerate zinc finger spans residues 885–907 (YGCDICGAAYTMESLLQNHQLRD). 3 consecutive C2H2-type zinc fingers follow at residues 929 to 951 (YKCN…MQTH), 958 to 980 (YMCP…KVTH), and 1019 to 1041 (FRCV…GTFH). Residues 1064–1082 (YKCASCLKEFRSKQDLVKL) form a C2H2-type 25; degenerate zinc finger. 5 consecutive C2H2-type zinc fingers follow at residues 1138 to 1161 (TRCS…QTIH), 1194 to 1216 (YQCI…VANH), 1224 to 1246 (HECK…LIEH), 1255 to 1278 (FKCP…FSAH), and 1285 to 1308 (YDCA…MSQH).

This sequence belongs to the krueppel C2H2-type zinc-finger protein family.

It is found in the nucleus. In terms of biological role, transcription factor that can both act as an activator or a repressor depending on the context. Involved in BMP signaling and in the regulation of the immature compartment of the hematopoietic system. The polypeptide is Zinc finger protein 521 (znf521) (Xenopus laevis (African clawed frog)).